The primary structure comprises 444 residues: S-locus-specific glycoprotein (444 aa).

An N-terminal signal peptide occupies residues 1–28 (MRGVIPNYHHSYTLFFFVILVLFPHVFS). The region spanning 31–159 (TLSPNEALTI…KTNDLDRFMW (129 aa)) is the Bulb-type lectin domain. 4 N-linked (GlcNAc...) asparagine glycosylation sites follow: Asn43, Asn125, Asn243, and Asn396. In terms of domain architecture, PAN spans 356 to 437 (CGEGDGFLRM…GGQDLYVKVA (82 aa)). Cystine bridges form between Cys387-Cys412 and Cys395-Cys397.

Stigma.

Involved in sporophytic self-incompatibility system (the inability of flowering plants to achieve self-fertilization). The sequence is that of S-locus-specific glycoprotein (SLSG) from Brassica oleracea var. alboglabra (Chinese kale).